We begin with the raw amino-acid sequence, 407 residues long: Lysophospholipid transporter LplT (407 aa).

11 consecutive transmembrane segments (helical) span residues 18 to 38, 53 to 73, 91 to 111, 139 to 159, 163 to 183, 229 to 249, 257 to 277, 286 to 306, 310 to 330, 343 to 365, and 375 to 395; these read AVII…FATL, FLQM…GQIA, AGAL…LVGV, LMEA…GVLA, IYGA…ANML, WGAG…ALGI, LLNA…AKLV, LPAG…HNLM, SLLI…NALL, AIAV…YSLV, and IGIG…VWLI.

The protein belongs to the major facilitator superfamily. LplT (TC 2.A.1.42) family.

Its subcellular location is the cell inner membrane. Functionally, catalyzes the facilitated diffusion of 2-acyl-glycero-3-phosphoethanolamine (2-acyl-GPE) into the cell. The chain is Lysophospholipid transporter LplT from Pectobacterium carotovorum subsp. carotovorum (strain PC1).